The sequence spans 205 residues: Protein N-terminal glutamine amidohydrolase (205 aa).

Active-site residues include Cys-20, His-74, and Asp-90.

Belongs to the NTAQ1 family. As to quaternary structure, monomer.

It catalyses the reaction N-terminal L-glutaminyl-[protein] + H2O = N-terminal L-glutamyl-[protein] + NH4(+). Mediates the side-chain deamidation of N-terminal glutamine residues to glutamate, an important step in N-end rule pathway of protein degradation. Conversion of the resulting N-terminal glutamine to glutamate renders the protein susceptible to arginylation, polyubiquitination and degradation as specified by the N-end rule. Does not act on substrates with internal or C-terminal glutamine and does not act on non-glutamine residues in any position. This chain is Protein N-terminal glutamine amidohydrolase (tun), found in Drosophila pseudoobscura pseudoobscura (Fruit fly).